The primary structure comprises 131 residues: MKRKMLKSKIHRATVTGADLHYEGSITIDSELMKQADILPYEAVDIWNVTYGTRFQTYAIEGQPGSGVICINGAAARMVSKGDMVIIASWIDIDADKAAAYEPKLVFVDDKNVPTTQKSENPGQGSLRNAI.

The active-site Schiff-base intermediate with substrate; via pyruvic acid is serine 25. Serine 25 is modified (pyruvic acid (Ser)). Threonine 57 lines the substrate pocket. Catalysis depends on tyrosine 58, which acts as the Proton donor. 73–75 (GAA) serves as a coordination point for substrate. The disordered stretch occupies residues 112–131 (NVPTTQKSENPGQGSLRNAI). Over residues 113 to 131 (VPTTQKSENPGQGSLRNAI) the composition is skewed to polar residues.

Belongs to the PanD family. As to quaternary structure, heterooctamer of four alpha and four beta subunits. Requires pyruvate as cofactor. Is synthesized initially as an inactive proenzyme, which is activated by self-cleavage at a specific serine bond to produce a beta-subunit with a hydroxyl group at its C-terminus and an alpha-subunit with a pyruvoyl group at its N-terminus.

The protein resides in the cytoplasm. It carries out the reaction L-aspartate + H(+) = beta-alanine + CO2. The protein operates within cofactor biosynthesis; (R)-pantothenate biosynthesis; beta-alanine from L-aspartate: step 1/1. Catalyzes the pyruvoyl-dependent decarboxylation of aspartate to produce beta-alanine. The polypeptide is Aspartate 1-decarboxylase (Syntrophotalea carbinolica (strain DSM 2380 / NBRC 103641 / GraBd1) (Pelobacter carbinolicus)).